Reading from the N-terminus, the 267-residue chain is Thymidylate synthase (267 aa).

R24 serves as a coordination point for dUMP. H54 lines the (6R)-5,10-methylene-5,6,7,8-tetrahydrofolate pocket. 129 to 130 (RR) lines the dUMP pocket. Residue C149 is the Nucleophile of the active site. DUMP-binding positions include 169-172 (RSAD), N180, and 210-212 (HVY). D172 serves as a coordination point for (6R)-5,10-methylene-5,6,7,8-tetrahydrofolate. (6R)-5,10-methylene-5,6,7,8-tetrahydrofolate is bound at residue A266.

Belongs to the thymidylate synthase family. Bacterial-type ThyA subfamily. As to quaternary structure, homodimer.

The protein resides in the cytoplasm. The enzyme catalyses dUMP + (6R)-5,10-methylene-5,6,7,8-tetrahydrofolate = 7,8-dihydrofolate + dTMP. It functions in the pathway pyrimidine metabolism; dTTP biosynthesis. Catalyzes the reductive methylation of 2'-deoxyuridine-5'-monophosphate (dUMP) to 2'-deoxythymidine-5'-monophosphate (dTMP) while utilizing 5,10-methylenetetrahydrofolate (mTHF) as the methyl donor and reductant in the reaction, yielding dihydrofolate (DHF) as a by-product. This enzymatic reaction provides an intracellular de novo source of dTMP, an essential precursor for DNA biosynthesis. In Paenarthrobacter aurescens (strain TC1), this protein is Thymidylate synthase.